Reading from the N-terminus, the 362-residue chain is Atypical chemokine receptor 3 (362 aa).

The Extracellular portion of the chain corresponds to 1–47 (MDVHLFDYAEPGNYSDINWPCNSSDCIVVDTVQCPTMPNKNVLLYTL). N-linked (GlcNAc...) asparagine glycosylation is found at Asn13 and Asn22. Residues 48 to 68 (SFIYIFIFVIGMIANSVVVWV) form a helical membrane-spanning segment. Residues 69–81 (NIQAKTTGYDTHC) lie on the Cytoplasmic side of the membrane. Residues 82 to 102 (YILNLAIADLWVVITIPVWVV) traverse the membrane as a helical segment. The Extracellular portion of the chain corresponds to 103 to 118 (SLVQHNQWPMGELTCK). Residues Cys117 and Cys196 are joined by a disulfide bond. Residues 119-139 (ITHLIFSINLFGSIFFLACMS) traverse the membrane as a helical segment. The Cytoplasmic segment spans residues 140–162 (VDRYLSITYFTGTSSYKKKMVRR). Residues 163–183 (VVCILVWLLAFFVSLPDTYYL) traverse the membrane as a helical segment. The Extracellular segment spans residues 184 to 213 (KTVTSASNNETYCRSFYPEHSIKEWLIGME). The chain crosses the membrane as a helical span at residues 214–234 (LVSVILGFAVPFTIIAIFYFL). Residues 235 to 252 (LARAMSASGDQEKHSSRK) lie on the Cytoplasmic side of the membrane. The helical transmembrane segment at 253–273 (IIFSYVVVFLVCWLPYHFVVL) threads the bilayer. The Extracellular portion of the chain corresponds to 274–296 (LDIFSILHYIPFTCQLENVLFTA). Residues 297–319 (LHVTQCLSLVHCCVNPVLYSFIN) traverse the membrane as a helical segment. The Cytoplasmic portion of the chain corresponds to 320-362 (RNYRYELMKAFIFKYSAKTGLTKLIDASRVSETEYSALEQNTK). The interval 324–362 (YELMKAFIFKYSAKTGLTKLIDASRVSETEYSALEQNTK) is C-terminal cytoplasmic tail. Phosphoserine is present on residues Ser347, Ser350, and Ser355.

This sequence belongs to the G-protein coupled receptor 1 family. Atypical chemokine receptor subfamily. In terms of assembly, homodimer. Can form heterodimers with CXCR4; heterodimerization may regulate CXCR4 signaling activity. Interacts with ARRB1 and ARRB2. The Ser/Thr residues in the C-terminal cytoplasmic tail may be phosphorylated. In terms of processing, ubiquitinated at the Lys residues in its C-terminal cytoplasmic tail and is essential for correct trafficking from and to the cell membrane. Deubiquitinated by CXCL12-stimulation in a reversible manner. In terms of tissue distribution, not detected in blood, liver, lung and heart, but high expression detected in several tumor cell lines (at protein level). Expressed in heart, spleen, kidney, lung, ovary, brain, testis, astrocytes, neutrophils and B-lymphocytes.

The protein resides in the cell membrane. It localises to the early endosome. It is found in the recycling endosome. Atypical chemokine receptor that controls chemokine levels and localization via high-affinity chemokine binding that is uncoupled from classic ligand-driven signal transduction cascades, resulting instead in chemokine sequestration, degradation, or transcytosis. Also known as interceptor (internalizing receptor) or chemokine-scavenging receptor or chemokine decoy receptor. Acts as a receptor for chemokines CXCL11 and CXCL12/SDF1. Chemokine binding does not activate G-protein-mediated signal transduction but instead induces beta-arrestin recruitment, leading to ligand internalization and activation of MAPK signaling pathway. Required for regulation of CXCR4 protein levels in migrating interneurons, thereby adapting their chemokine responsiveness. In glioma cells, transduces signals via MEK/ERK pathway, mediating resistance to apoptosis. Promotes cell growth and survival. Not involved in cell migration, adhesion or proliferation of normal hematopoietic progenitors but activated by CXCL11 in malignant hemapoietic cells, leading to phosphorylation of ERK1/2 (MAPK3/MAPK1) and enhanced cell adhesion and migration. Plays a regulatory role in CXCR4-mediated activation of cell surface integrins by CXCL12. Required for heart valve development. Regulates axon guidance in the oculomotor system through the regulation of CXCL12 levels. This is Atypical chemokine receptor 3 from Mus musculus (Mouse).